We begin with the raw amino-acid sequence, 113 residues long: Insulin-like peptide 02 (113 aa).

The signal sequence occupies residues 1 to 22 (MFYLTFLLFGAICIGQIQLGQP). The propeptide occupies 23-42 (VKFKVNEDGHRPSVYPIKYR). Disulfide bonds link C44/C99, C56/C112, and C98/C103. Residues 62–87 (RRKRSIEADIITDKDTANSYFNRVKR) constitute a propeptide, c peptide.

It belongs to the insulin family.

It is found in the secreted. In terms of biological role, insulin decreases blood glucose concentration. May have evolved to activate insulin receptors (INSR) in vertebrates. Molecular docking studies reveals unique interaction with the human insulin receptor. In vivo, insulin-like peptide injection reduces blood glucose levels in two models of zebrafish diabetes (streptozotocin- and glucose-induced). Also shorter swimming distance of zebrafish larvae, an effect which is not observed with human insulin. The sequence is that of Insulin-like peptide 02 from Exaiptasia diaphana (Tropical sea anemone).